We begin with the raw amino-acid sequence, 546 residues long: Chaperonin GroEL (546 aa).

Residues 30–33 (TLGP), Lys51, 87–91 (DGTTT), Gly415, 479–481 (NAA), and Asp495 each bind ATP.

This sequence belongs to the chaperonin (HSP60) family. As to quaternary structure, forms a cylinder of 14 subunits composed of two heptameric rings stacked back-to-back. Interacts with the co-chaperonin GroES.

It is found in the cytoplasm. The catalysed reaction is ATP + H2O + a folded polypeptide = ADP + phosphate + an unfolded polypeptide.. Together with its co-chaperonin GroES, plays an essential role in assisting protein folding. The GroEL-GroES system forms a nano-cage that allows encapsulation of the non-native substrate proteins and provides a physical environment optimized to promote and accelerate protein folding. This is Chaperonin GroEL from Stutzerimonas stutzeri (strain A1501) (Pseudomonas stutzeri).